The chain runs to 415 residues: F-box protein ETP1 (415 aa).

Positions 1–46 constitute an F-box domain; the sequence is MTIPDLCNDLVDEILCRVPARNLKRLRSTSKRWNRLFKDDRRFARE.

Interacts with EIN2 (via C-terminus).

Negative regulator of EIN2 protein stability. The chain is F-box protein ETP1 from Arabidopsis thaliana (Mouse-ear cress).